Consider the following 61-residue polypeptide: Early E3 6.4 kDa protein (61 aa).

The disordered stretch occupies residues 1–25; sequence MGNAGPLKLHTITKPGTIPYPPHGS.

This Homo sapiens (Human) protein is Early E3 6.4 kDa protein.